Here is a 378-residue protein sequence, read N- to C-terminus: Dual-specificity RNA methyltransferase RlmN (378 aa).

Residue Glu95 is the Proton acceptor of the active site. The Radical SAM core domain occupies 101–345 (EETRGTLCVS…TTIRKTRGDD (245 aa)). A disulfide bond links Cys108 and Cys350. [4Fe-4S] cluster is bound by residues Cys115, Cys119, and Cys122. S-adenosyl-L-methionine-binding positions include 176 to 177 (GE), Ser208, 230 to 232 (SLH), and Asn307. Cys350 serves as the catalytic S-methylcysteine intermediate.

This sequence belongs to the radical SAM superfamily. RlmN family. The cofactor is [4Fe-4S] cluster.

The protein localises to the cytoplasm. The enzyme catalyses adenosine(2503) in 23S rRNA + 2 reduced [2Fe-2S]-[ferredoxin] + 2 S-adenosyl-L-methionine = 2-methyladenosine(2503) in 23S rRNA + 5'-deoxyadenosine + L-methionine + 2 oxidized [2Fe-2S]-[ferredoxin] + S-adenosyl-L-homocysteine. It carries out the reaction adenosine(37) in tRNA + 2 reduced [2Fe-2S]-[ferredoxin] + 2 S-adenosyl-L-methionine = 2-methyladenosine(37) in tRNA + 5'-deoxyadenosine + L-methionine + 2 oxidized [2Fe-2S]-[ferredoxin] + S-adenosyl-L-homocysteine. In terms of biological role, specifically methylates position 2 of adenine 2503 in 23S rRNA and position 2 of adenine 37 in tRNAs. m2A2503 modification seems to play a crucial role in the proofreading step occurring at the peptidyl transferase center and thus would serve to optimize ribosomal fidelity. This Burkholderia thailandensis (strain ATCC 700388 / DSM 13276 / CCUG 48851 / CIP 106301 / E264) protein is Dual-specificity RNA methyltransferase RlmN.